A 66-amino-acid polypeptide reads, in one-letter code: Large ribosomal subunit protein bL35 (66 aa).

Positions 1 to 46 are enriched in basic residues; that stretch reads MPKMKTHRASAKRFKRTANGGLKRHHAFTGHRFHGKTKKQRRHLRK. Residues 1 to 52 are disordered; sequence MPKMKTHRASAKRFKRTANGGLKRHHAFTGHRFHGKTKKQRRHLRKPAMVSR.

Belongs to the bacterial ribosomal protein bL35 family.

The sequence is that of Large ribosomal subunit protein bL35 from Lactobacillus acidophilus (strain ATCC 700396 / NCK56 / N2 / NCFM).